We begin with the raw amino-acid sequence, 119 residues long: Large ribosomal subunit protein bL20 (119 aa).

It belongs to the bacterial ribosomal protein bL20 family.

Functionally, binds directly to 23S ribosomal RNA and is necessary for the in vitro assembly process of the 50S ribosomal subunit. It is not involved in the protein synthesizing functions of that subunit. The protein is Large ribosomal subunit protein bL20 of Xanthomonas campestris pv. campestris (strain 8004).